Consider the following 233-residue polypeptide: Phosphoribosylformylglycinamidine synthase subunit PurQ (233 aa).

Residues 3 to 233 (SAILVFPGIN…GLVAHLERAA (231 aa)) form the Glutamine amidotransferase type-1 domain. The Nucleophile role is filled by cysteine 87. Active-site residues include histidine 204 and glutamate 206.

In terms of assembly, part of the FGAM synthase complex composed of 1 PurL, 1 PurQ and 2 PurS subunits.

It is found in the cytoplasm. The enzyme catalyses N(2)-formyl-N(1)-(5-phospho-beta-D-ribosyl)glycinamide + L-glutamine + ATP + H2O = 2-formamido-N(1)-(5-O-phospho-beta-D-ribosyl)acetamidine + L-glutamate + ADP + phosphate + H(+). It catalyses the reaction L-glutamine + H2O = L-glutamate + NH4(+). The protein operates within purine metabolism; IMP biosynthesis via de novo pathway; 5-amino-1-(5-phospho-D-ribosyl)imidazole from N(2)-formyl-N(1)-(5-phospho-D-ribosyl)glycinamide: step 1/2. Functionally, part of the phosphoribosylformylglycinamidine synthase complex involved in the purines biosynthetic pathway. Catalyzes the ATP-dependent conversion of formylglycinamide ribonucleotide (FGAR) and glutamine to yield formylglycinamidine ribonucleotide (FGAM) and glutamate. The FGAM synthase complex is composed of three subunits. PurQ produces an ammonia molecule by converting glutamine to glutamate. PurL transfers the ammonia molecule to FGAR to form FGAM in an ATP-dependent manner. PurS interacts with PurQ and PurL and is thought to assist in the transfer of the ammonia molecule from PurQ to PurL. The polypeptide is Phosphoribosylformylglycinamidine synthase subunit PurQ (Nitrobacter hamburgensis (strain DSM 10229 / NCIMB 13809 / X14)).